We begin with the raw amino-acid sequence, 400 residues long: Large envelope protein (400 aa).

Methionine 1 carries the N-acetylmethionine modification. Disordered regions lie at residues 1–24 (MGGWSSKPRKGMGTNLSVPNPLGF) and 89–116 (PAMPPPASTNRQSGRQPTPISPPLRDSH). A lipid anchor (N-myristoyl glycine; by host) is attached at glycine 2. The segment at 2-119 (GGWSSKPRKG…PPLRDSHPQA (118 aa)) is pre-S1. The tract at residues 2–174 (GGWSSKPRKG…SSRIGDPAPN (173 aa)) is pre-S. Residues 2-181 (GGWSSKPRKG…APNMENITSG (180 aa)) are Virion surface; in external conformation-facing. At 2 to 253 (GGWSSKPRKG…PGYRWMCLRR (252 aa)) the chain is on the intravirion; in internal conformation side. Tryptophan 4 carries N-linked (GlcNAc...) asparagine glycosylation. Over residues 96 to 106 (STNRQSGRQPT) the composition is skewed to polar residues. Residues 120–174 (MQWNSTAFHQALQDPRVRGLYFPAGGSSSGTLNPVPTIASHISSISSRIGDPAPN) are pre-S2. A helical membrane pass occupies residues 182–202 (FLGPLLVLQAGFFLLTRILTI). Residues 203–253 (PQSLDSWWTSLNFLGGAPVCLGQNSQSPTSNHSPTSCPPICPGYRWMCLRR) lie on the Intravirion; in external conformation side of the membrane. The chain crosses the membrane as a helical span at residues 254-274 (FIIFLFILLLCLIFLLVLLDY). Residues 275–348 (QGMLPVCPLI…WASVRFSWLS (74 aa)) lie on the Virion surface side of the membrane. A glycan (N-linked (GlcNAc...) asparagine; by host) is linked at asparagine 320. The chain crosses the membrane as a helical span at residues 349–369 (LLVPFVQWFVGLSPTVWLSAI). Topologically, residues 370-375 (WMMWYW) are intravirion. Residues 376-398 (GPSLYNILSPFIPLLPIFFCLWV) traverse the membrane as a helical segment. The Virion surface portion of the chain corresponds to 399 to 400 (YI).

Belongs to the orthohepadnavirus major surface antigen family. In terms of assembly, in its internal form (Li-HBsAg), interacts with the capsid protein and with the isoform S. Interacts with host chaperone CANX. Associates with host chaperone CANX through its pre-S2 N glycan; this association may be essential for isoform M proper secretion. As to quaternary structure, interacts with isoform L. Interacts with the antigens of satellite virus HDV (HDVAgs); this interaction is required for encapsidation of HDV genomic RNA. Isoform M is N-terminally acetylated by host at a ratio of 90%, and N-glycosylated by host at the pre-S2 region. Post-translationally, myristoylated.

The protein resides in the virion membrane. Its function is as follows. The large envelope protein exists in two topological conformations, one which is termed 'external' or Le-HBsAg and the other 'internal' or Li-HBsAg. In its external conformation the protein attaches the virus to cell receptors and thereby initiating infection. This interaction determines the species specificity and liver tropism. This attachment induces virion internalization predominantly through caveolin-mediated endocytosis. The large envelope protein also assures fusion between virion membrane and endosomal membrane. In its internal conformation the protein plays a role in virion morphogenesis and mediates the contact with the nucleocapsid like a matrix protein. Functionally, the middle envelope protein plays an important role in the budding of the virion. It is involved in the induction of budding in a nucleocapsid independent way. In this process the majority of envelope proteins bud to form subviral lipoprotein particles of 22 nm of diameter that do not contain a nucleocapsid. In Hepatitis B virus genotype A1 subtype adw (isolate Philippines/pFDW294/1988) (HBV-A), this protein is Large envelope protein.